We begin with the raw amino-acid sequence, 250 residues long: MSKENKTTDFGFTQVPWEEKQKKVAGVFHSVAAKYDLMNDLMSFGIHRIWKKQTIAKSGVRKGDNVLDLAGGTGDLAYKFCQMVGQQGKVILSDINSSMLEVGKEKLTNKGCVGNIEYVQANAECLPFPDNYFDCITISFGLRNVTDKDKALASMCRVLKPGGRLLVLEFSKPIIPLLSKVYDEYSFKALPFLGKIITQDAESYKYLAESIRKHPDQQTLKQMMYDAGFDNVEYQNMTGGIVALHIGYKY.

Residues T73, D94, 122–123 (NA), and S139 each bind S-adenosyl-L-methionine.

This sequence belongs to the class I-like SAM-binding methyltransferase superfamily. MenG/UbiE family.

The enzyme catalyses a 2-demethylmenaquinol + S-adenosyl-L-methionine = a menaquinol + S-adenosyl-L-homocysteine + H(+). It catalyses the reaction a 2-methoxy-6-(all-trans-polyprenyl)benzene-1,4-diol + S-adenosyl-L-methionine = a 5-methoxy-2-methyl-3-(all-trans-polyprenyl)benzene-1,4-diol + S-adenosyl-L-homocysteine + H(+). It functions in the pathway quinol/quinone metabolism; menaquinone biosynthesis; menaquinol from 1,4-dihydroxy-2-naphthoate: step 2/2. The protein operates within cofactor biosynthesis; ubiquinone biosynthesis. Functionally, methyltransferase required for the conversion of demethylmenaquinol (DMKH2) to menaquinol (MKH2) and the conversion of 2-polyprenyl-6-methoxy-1,4-benzoquinol (DDMQH2) to 2-polyprenyl-3-methyl-6-methoxy-1,4-benzoquinol (DMQH2). This is Ubiquinone/menaquinone biosynthesis C-methyltransferase UbiE from Francisella tularensis subsp. mediasiatica (strain FSC147).